The following is a 1357-amino-acid chain: MGFRELFASSLGDAARAKASLVRGMSGWLNTTLATVQAAGPEIRACAYSALWAEVDSVKELVPLSATMLLNQLRADLKCAQVRAQKCTPASTSRFCSCGGIPLPGENKWEDELVPIPDCPVGRNFCRDGVFCKRHHGPGETLERVQVLVEAPKCPHCQGTGIIPRSEPMAYIRSEYERQTKTFARPSNPLHEWILEEGRESNHARRCSNWYHMSMSQIDKRDNDPCDASTWMAAAQILFDNADAQVYYPGSNYRKLVGGSKGYDDWCQLPPSKEMCNRLFDWWHRQNTPDYYVSEDTLADFVKPRMGSCHLPIEHDVHLLPREWHGRVSAGNTSHFMACLDGLSSSMEEFLDVFYDCAAQFNGDIEIFLDTNEKPSRVVGNLGGVRVLLTTPAVCSPAKLLPEIEESDFDQLEDESISCDSMIPPLFRDNGLSALYANLVLKQATVQSILMAHPDQDEIEDQVDHLENKQGGEIVTTPAFIKMLKEKRKEVRGKEFAEGSEGRLVRASDLTLSREDVFLSGGLFEKFRKSGIVQTFKGKDPKLTKVCVDLTNSQEIIKYPSKEMCSDSSGVHTGQVFTVLNRPLYNELNKLAESGWKEAKSVCLNLHIRSYVPVHTPLYAFCVIMWGHSSDAETASLCGAGVYLGDQEAAVLELPLVCSYLGNSLEDFDAYKRSLVLSTVFFGKSGLFAGQNVFGITAVEFTEYMPTSYGGITHERDSWQAMLRNHQGKDKGRFIAGFNVVDALERDKEEPIKMPNLDLEPVPRTQPIVRTFTGEGKQPLLNKSRSMRIQSFVSFRGSNIPVGRRIDNTAEAINYELGRASTSSVSSRLDESKCNLKAGGSYAFGETIELPATVTPGTVLAVFNIFDKIQETNTKVCSKWLEQGYVSQNLTAISHLAPNAFSGIAIWYIFDAYGKIPGDVTTTFELEMARSFDPHVQVLRDVSTSTWVIDFHKICGQTLNFSGQGYCVPKIWVIAASTFQLARSTATKFRLEFYTRGEKLVRGLAEQPLSYPIEARHLTDLNLMLAPKQIAVGTYAMITFPVSLAAKLQSTSGRTAYSYAAGLLSHFLGVGGTIHFVVRTTSSAFVTSKLRIALWGTVPETDQLAQMPHVDVEVNVDASLQIQSPFFSTANFGNSGSAFYVSTLCAPMAPETVETGSEYYIQIKGIEANPGLCREINYKQRFAWCLLECLDNSKASPIKVKIPSRIGNLSSKHVKVTNFVNALAILCATTGMHHGNCTIHFSWLWHPAELGKQLGRLKFVQGMGINNEHIGDTMCYNSLSNTHSVPFQFGSFAGPITSGGKADEAENWIEIQSPDFSWVASLHVSIEVHEGFKFYGRSAGPLTIPATVADVSAVSGS.

It belongs to the nepoviruses RNA2 polyprotein family. Post-translationally, specific enzymatic cleavages in vivo by the P1 encoded 3C-like protease yield mature proteins.

It localises to the host cell junction. The protein localises to the host plasmodesma. Its subcellular location is the host cytoplasm. The protein resides in the host nucleus. It is found in the virion. Implicated in RNA2 replication. Could also be required for nematode transmission of the virus. Its function is as follows. Transports viral genome to neighboring plant cells directly through plasmosdesmata, without any budding. The movement protein allows efficient cell to cell propagation, by bypassing the host cell wall barrier. Acts by forming a tubular structure at the host plasmodesmata, enlarging it enough to allow free passage of virion capsids. The chain is RNA2 polyprotein from Beet ringspot virus (BRSV).